A 419-amino-acid chain; its full sequence is Oligouridylate-binding protein 1B (419 aa).

RRM domains lie at 54 to 128 and 139 to 217; these read RSVY…WAYA and FNIF…WATK. The interval 217–257 is disordered; that stretch reads KGATSGEDKQSSDSKSVVELTSGVSEDGKDTTNGEAPENNA. Position 241 is a phosphoserine (serine 241). Positions 260–335 constitute an RRM 3 domain; that stretch reads TTVYVGNLAP…RQMKCSWGSK (76 aa).

Interacts with UBA1A and UBA2A.

The protein localises to the nucleus. In terms of biological role, heterogeneous nuclear ribonucleoprotein (hnRNP)-like protein that acts as a component of the pre-mRNA processing machinery. Functions to facilitate the nuclear maturation of plant pre-mRNAs. The polypeptide is Oligouridylate-binding protein 1B (UBP1B) (Arabidopsis thaliana (Mouse-ear cress)).